A 174-amino-acid polypeptide reads, in one-letter code: Small ribosomal subunit protein uS5 (174 aa).

Positions 19-82 constitute an S5 DRBM domain; sequence LREKMVAINR…DEARRKLKKI (64 aa).

This sequence belongs to the universal ribosomal protein uS5 family. In terms of assembly, part of the 30S ribosomal subunit. Contacts proteins S4 and S8.

In terms of biological role, with S4 and S12 plays an important role in translational accuracy. Its function is as follows. Located at the back of the 30S subunit body where it stabilizes the conformation of the head with respect to the body. This is Small ribosomal subunit protein uS5 from Aromatoleum aromaticum (strain DSM 19018 / LMG 30748 / EbN1) (Azoarcus sp. (strain EbN1)).